Consider the following 337-residue polypeptide: Cobalt-precorrin-5B C(1)-methyltransferase (337 aa).

The protein belongs to the CbiD family.

It catalyses the reaction Co-precorrin-5B + S-adenosyl-L-methionine = Co-precorrin-6A + S-adenosyl-L-homocysteine. It participates in cofactor biosynthesis; adenosylcobalamin biosynthesis; cob(II)yrinate a,c-diamide from sirohydrochlorin (anaerobic route): step 6/10. In terms of biological role, catalyzes the methylation of C-1 in cobalt-precorrin-5B to form cobalt-precorrin-6A. The polypeptide is Cobalt-precorrin-5B C(1)-methyltransferase (Methanoculleus marisnigri (strain ATCC 35101 / DSM 1498 / JR1)).